Consider the following 387-residue polypeptide: EARP-interacting protein homolog (387 aa).

WD repeat units follow at residues 132–172 (TAHG…TKSV), 182–222 (KGQL…QIYC), 226–266 (AHGQ…EPVK), and 270–310 (EHSH…SEPF). The disordered stretch occupies residues 311 to 339 (GHLVDDEDLSDQEDNPQEEKTKEPLQDSI). The span at 315-326 (DDEDLSDQEDNP) shows a compositional bias: acidic residues. The WD 5 repeat unit spans residues 345–385 (EHEDSVYAVEWSSADPWLFASLSYDGRLVINRVPRALKYNI).

Belongs to the WD repeat EIPR1 family.

The protein localises to the golgi apparatus. It localises to the trans-Golgi network. Its function is as follows. May act as a component of endosomal retrieval machinery that is involved in protein transport from early endosomes to either recycling endosomes or the trans-Golgi network. This is EARP-interacting protein homolog from Xenopus laevis (African clawed frog).